An 86-amino-acid chain; its full sequence is Large ribosomal subunit protein uL23 (86 aa).

It belongs to the universal ribosomal protein uL23 family. In terms of assembly, part of the 50S ribosomal subunit. Contacts protein L29.

In terms of biological role, binds to 23S rRNA. One of the proteins that surrounds the polypeptide exit tunnel on the outside of the ribosome. The chain is Large ribosomal subunit protein uL23 from Pyrococcus abyssi (strain GE5 / Orsay).